The sequence spans 71 residues: Large ribosomal subunit protein bL31 (71 aa).

Residues C16, C18, C37, and C40 each contribute to the Zn(2+) site.

Belongs to the bacterial ribosomal protein bL31 family. Type A subfamily. Part of the 50S ribosomal subunit. The cofactor is Zn(2+).

Functionally, binds the 23S rRNA. The sequence is that of Large ribosomal subunit protein bL31 from Pseudomonas putida (strain GB-1).